Consider the following 500-residue polypeptide: Maturase K (500 aa).

Belongs to the intron maturase 2 family. MatK subfamily.

The protein localises to the plastid. It is found in the chloroplast. In terms of biological role, usually encoded in the trnK tRNA gene intron. Probably assists in splicing its own and other chloroplast group II introns. This is Maturase K from Brasenia schreberi (Water shield).